We begin with the raw amino-acid sequence, 697 residues long: Heat shock protein homolog SSE1 (697 aa).

Over residues 664–674 the composition is skewed to low complexity; it reads EMAEKLAAQRA. Residues 664–697 form a disordered region; the sequence is EMAEKLAAQRAAEQKAQESKAESDKDAEGDIDLD. A compositionally biased stretch (basic and acidic residues) spans 675-691; sequence AEQKAQESKAESDKDAE.

This sequence belongs to the heat shock protein 70 family.

It is found in the cytoplasm. The chain is Heat shock protein homolog SSE1 (SSE1) from Eremothecium gossypii (strain ATCC 10895 / CBS 109.51 / FGSC 9923 / NRRL Y-1056) (Yeast).